A 178-amino-acid chain; its full sequence is Adenine phosphoribosyltransferase (178 aa).

This sequence belongs to the purine/pyrimidine phosphoribosyltransferase family. Homodimer.

The protein resides in the cytoplasm. The catalysed reaction is AMP + diphosphate = 5-phospho-alpha-D-ribose 1-diphosphate + adenine. Its pathway is purine metabolism; AMP biosynthesis via salvage pathway; AMP from adenine: step 1/1. Its function is as follows. Catalyzes a salvage reaction resulting in the formation of AMP, that is energically less costly than de novo synthesis. The chain is Adenine phosphoribosyltransferase from Cereibacter sphaeroides (strain ATCC 17029 / ATH 2.4.9) (Rhodobacter sphaeroides).